Reading from the N-terminus, the 388-residue chain is Succinyl-diaminopimelate desuccinylase (388 aa).

A Zn(2+)-binding site is contributed by His-75. Asp-77 is an active-site residue. Residue Asp-108 participates in Zn(2+) binding. Residue Glu-142 is the Proton acceptor of the active site. Zn(2+)-binding residues include Glu-143, Glu-171, and His-361.

Belongs to the peptidase M20A family. DapE subfamily. In terms of assembly, homodimer. Zn(2+) serves as cofactor. Co(2+) is required as a cofactor.

It catalyses the reaction N-succinyl-(2S,6S)-2,6-diaminopimelate + H2O = (2S,6S)-2,6-diaminopimelate + succinate. It functions in the pathway amino-acid biosynthesis; L-lysine biosynthesis via DAP pathway; LL-2,6-diaminopimelate from (S)-tetrahydrodipicolinate (succinylase route): step 3/3. Catalyzes the hydrolysis of N-succinyl-L,L-diaminopimelic acid (SDAP), forming succinate and LL-2,6-diaminopimelate (DAP), an intermediate involved in the bacterial biosynthesis of lysine and meso-diaminopimelic acid, an essential component of bacterial cell walls. The polypeptide is Succinyl-diaminopimelate desuccinylase (Methylocella silvestris (strain DSM 15510 / CIP 108128 / LMG 27833 / NCIMB 13906 / BL2)).